The primary structure comprises 287 residues: ATP synthase gamma chain (287 aa).

Belongs to the ATPase gamma chain family. In terms of assembly, F-type ATPases have 2 components, CF(1) - the catalytic core - and CF(0) - the membrane proton channel. CF(1) has five subunits: alpha(3), beta(3), gamma(1), delta(1), epsilon(1). CF(0) has three main subunits: a, b and c.

It localises to the cell membrane. Functionally, produces ATP from ADP in the presence of a proton gradient across the membrane. The gamma chain is believed to be important in regulating ATPase activity and the flow of protons through the CF(0) complex. This Bacillus velezensis (strain DSM 23117 / BGSC 10A6 / LMG 26770 / FZB42) (Bacillus amyloliquefaciens subsp. plantarum) protein is ATP synthase gamma chain.